Reading from the N-terminus, the 337-residue chain is uncharacterized protein (337 aa).

Over 1–10 (MKLKINIRPN) the chain is Cytoplasmic. Residues 11-31 (EIIFLICIVVIFSFSYTLTYF) traverse the membrane as a helical segment. The Extracellular portion of the chain corresponds to 32 to 100 (DSPIFKEHYI…LEKLFSFSDN (69 aa)). The chain crosses the membrane as a helical span at residues 101–121 (ILIVLIIVQVIVGFLIFLLSV). Topologically, residues 122–197 (EKLSKCNYQL…KILIIKKKRD (76 aa)) are cytoplasmic. Over residues 148–167 (NNNNEDINNNNNNNNNNNNK) the composition is skewed to low complexity. The disordered stretch occupies residues 148 to 179 (NNNNEDINNNNNNNNNNNNKNKNDERNNEEIE). The chain crosses the membrane as a helical span at residues 198–218 (ILLAIIIFFLVLLGVLTIIYV). The Extracellular segment spans residues 219 to 285 (SFIPLNIRKA…SWSLDSGLFN (67 aa)). A helical transmembrane segment spans residues 286–306 (VKIVFFSTILIEFLTGCLILL). Residues 307 to 337 (MKFKKDPNIVPLTKPSIASPTQIPHLFCIAK) lie on the Cytoplasmic side of the membrane.

Its subcellular location is the membrane. This is an uncharacterized protein from Dictyostelium discoideum (Social amoeba).